The following is a 161-amino-acid chain: Small ribosomal subunit protein uS19 (161 aa).

The segment covering 1–19 (MARQKKYSGKGGARKKNKQ) has biased composition (basic residues). Residues 1 to 26 (MARQKKYSGKGGARKKNKQKQNVAPR) are disordered.

The protein belongs to the universal ribosomal protein uS19 family.

Its function is as follows. Protein S19 forms a complex with S13 that binds strongly to the 16S ribosomal RNA. This Methanococcus maripaludis (strain C5 / ATCC BAA-1333) protein is Small ribosomal subunit protein uS19.